Here is a 61-residue protein sequence, read N- to C-terminus: Putative neurotoxin-A (61 aa).

The signal sequence occupies residues 1–19 (MKTVCGVFMVLLALTVLLA). 3 disulfide bridges follow: cysteine 31–cysteine 50, cysteine 36–cysteine 55, and cysteine 40–cysteine 57.

The protein belongs to the short scorpion toxin superfamily. In terms of tissue distribution, expressed by the venom gland.

It is found in the secreted. In Lychas mucronatus (Chinese swimming scorpion), this protein is Putative neurotoxin-A.